The chain runs to 421 residues: UDP-N-acetylglucosamine 1-carboxyvinyltransferase (421 aa).

22-23 (KN) lines the phosphoenolpyruvate pocket. Position 94 (Arg-94) interacts with UDP-N-acetyl-alpha-D-glucosamine. Cys-118 serves as the catalytic Proton donor. At Cys-118 the chain carries 2-(S-cysteinyl)pyruvic acid O-phosphothioketal. Residues 163–166 (KVSV), Asp-308, and Ile-330 contribute to the UDP-N-acetyl-alpha-D-glucosamine site.

Belongs to the EPSP synthase family. MurA subfamily.

It localises to the cytoplasm. It carries out the reaction phosphoenolpyruvate + UDP-N-acetyl-alpha-D-glucosamine = UDP-N-acetyl-3-O-(1-carboxyvinyl)-alpha-D-glucosamine + phosphate. The protein operates within cell wall biogenesis; peptidoglycan biosynthesis. Its function is as follows. Cell wall formation. Adds enolpyruvyl to UDP-N-acetylglucosamine. This Orientia tsutsugamushi (strain Ikeda) (Rickettsia tsutsugamushi) protein is UDP-N-acetylglucosamine 1-carboxyvinyltransferase.